Here is a 326-residue protein sequence, read N- to C-terminus: Probable UDP-3-O-acyl-N-acetylglucosamine deacetylase 2, mitochondrial (326 aa).

The N-terminal 21 residues, 1–21 (MRLPVTVKATKPSFLVIWIRY), are a transit peptide targeting the mitochondrion. 3 residues coordinate Zn(2+): His109, His281, and Asp285.

This sequence belongs to the LpxC family. The cofactor is Zn(2+).

The protein resides in the mitochondrion. It catalyses the reaction a UDP-3-O-[(3R)-3-hydroxyacyl]-N-acetyl-alpha-D-glucosamine + H2O = a UDP-3-O-[(3R)-3-hydroxyacyl]-alpha-D-glucosamine + acetate. The protein operates within glycolipid biosynthesis; lipid IV(A) biosynthesis; lipid IV(A) from (3R)-3-hydroxytetradecanoyl-[acyl-carrier-protein] and UDP-N-acetyl-alpha-D-glucosamine: step 2/6. Its function is as follows. Involved in the biosynthesis of lipid A, a phosphorylated glycolipid that in bacteria anchors the lipopolysaccharide to the outer membrane of the cell. Lipid A-like molecules in plants may serve as structural components of the outer membranes of mitochondria and/or chloroplasts, or may be involved in signal transduction or plant defense responses (Potential). The protein is Probable UDP-3-O-acyl-N-acetylglucosamine deacetylase 2, mitochondrial (LPXC2) of Arabidopsis thaliana (Mouse-ear cress).